We begin with the raw amino-acid sequence, 563 residues long: F-box/kelch-repeat protein At5g42350 (563 aa).

In terms of domain architecture, F-box spans 129–175; that stretch reads YRKHVYLPDDILEMCLMRLPLTSLLNAHLVCKKWQSMANTQRFLQMR. 3 Kelch repeats span residues 184 to 231, 232 to 282, and 355 to 402; these read WLFL…SIHE, EIYI…ATEV, and VLIA…IICN.

This Arabidopsis thaliana (Mouse-ear cress) protein is F-box/kelch-repeat protein At5g42350.